The primary structure comprises 274 residues: 3-methyl-2-oxobutanoate hydroxymethyltransferase (274 aa).

Mg(2+)-binding residues include aspartate 54 and aspartate 93. 3-methyl-2-oxobutanoate-binding positions include 54–55 (DS), aspartate 93, and lysine 121. Glutamate 123 is a binding site for Mg(2+). The Proton acceptor role is filled by glutamate 190.

The protein belongs to the PanB family. Homodecamer; pentamer of dimers. Requires Mg(2+) as cofactor.

Its subcellular location is the cytoplasm. The enzyme catalyses 3-methyl-2-oxobutanoate + (6R)-5,10-methylene-5,6,7,8-tetrahydrofolate + H2O = 2-dehydropantoate + (6S)-5,6,7,8-tetrahydrofolate. Its pathway is cofactor biosynthesis; (R)-pantothenate biosynthesis; (R)-pantoate from 3-methyl-2-oxobutanoate: step 1/2. Functionally, catalyzes the reversible reaction in which hydroxymethyl group from 5,10-methylenetetrahydrofolate is transferred onto alpha-ketoisovalerate to form ketopantoate. The sequence is that of 3-methyl-2-oxobutanoate hydroxymethyltransferase from Ralstonia nicotianae (strain ATCC BAA-1114 / GMI1000) (Ralstonia solanacearum).